We begin with the raw amino-acid sequence, 1607 residues long: Thrombospondin type-1 domain-containing protein 7B (1607 aa).

Residues 1 to 31 (MFLRSDLAVTHWVSRSMRKLFLVLSLLLSQA) form the signal peptide. Residues 32–1556 (AHLEGRKDNQ…QPLDPDGRVK (1525 aa)) lie on the Extracellular side of the membrane. 18 TSP type-1 domains span residues 40–98 (NQFL…RVCD), 102–177 (DLFQ…IPCP), 179–233 (DCVV…VSCP), 336–392 (DCET…IAEG), 399–482 (PRYS…VPCS), 484–543 (DCIV…PMCH), 601–661 (DCVV…HSCT), 662–735 (QLYW…LPCK), 737–796 (DCLV…SLCP), 797–869 (SYRW…IPCR), 871–924 (DCTF…CPCD), 925–999 (TFMS…IPCP), 1001–1126 (DCKL…LLCP), 1128–1182 (ECVM…ENCF), 1183–1246 (QFQY…VECV), 1248–1303 (NCQL…TPCY), 1304–1369 (SWVL…VPCP), and 1371–1432 (DCHI…GKCY). N-linked (GlcNAc...) asparagine glycosylation is found at Asn-150 and Asn-219. Cystine bridges form between Cys-411-Cys-477, Cys-431-Cys-481, and Cys-442-Cys-466. 3 cysteine pairs are disulfide-bonded: Cys-602-Cys-643, Cys-613-Cys-617, and Cys-655-Cys-660. Asn-683 is a glycosylation site (N-linked (GlcNAc...) asparagine). 3 disulfide bridges follow: Cys-738/Cys-779, Cys-749/Cys-753, and Cys-789/Cys-795. A glycan (N-linked (GlcNAc...) asparagine) is linked at Asn-757. Residue Asn-842 is glycosylated (N-linked (GlcNAc...) asparagine). A glycan (N-linked (GlcNAc...) asparagine) is linked at Asn-933. Cystine bridges form between Cys-937/Cys-994, Cys-960/Cys-998, Cys-971/Cys-984, Cys-1002/Cys-1039, and Cys-1013/Cys-1017. N-linked (GlcNAc...) asparagine glycosylation is present at Asn-985. An N-linked (GlcNAc...) asparagine glycan is attached at Asn-1105. A disulfide bridge links Cys-1121 with Cys-1125. 2 N-linked (GlcNAc...) asparagine glycosylation sites follow: Asn-1187 and Asn-1199. 3 disulfides stabilise this stretch: Cys-1249/Cys-1287, Cys-1260/Cys-1264, and Cys-1297/Cys-1302. N-linked (GlcNAc...) asparagine glycosylation is found at Asn-1309 and Asn-1335. Intrachain disulfides connect Cys-1372–Cys-1416, Cys-1383–Cys-1387, and Cys-1426–Cys-1431. Asn-1457 and Asn-1525 each carry an N-linked (GlcNAc...) asparagine glycan. A helical membrane pass occupies residues 1557 to 1577 (MWVYGVSGGSFLIMIFLVFTS). The Cytoplasmic segment spans residues 1578 to 1607 (YLVCKKPKPHQSTPRHQKPLTLAYDGDLDM).

It is found in the membrane. The polypeptide is Thrombospondin type-1 domain-containing protein 7B (Mus musculus (Mouse)).